Reading from the N-terminus, the 289-residue chain is tRNA pseudouridine synthase B (289 aa).

Catalysis depends on Asp-38, which acts as the Nucleophile.

It belongs to the pseudouridine synthase TruB family. Type 1 subfamily.

The catalysed reaction is uridine(55) in tRNA = pseudouridine(55) in tRNA. In terms of biological role, responsible for synthesis of pseudouridine from uracil-55 in the psi GC loop of transfer RNAs. The chain is tRNA pseudouridine synthase B from Clostridium tetani (strain Massachusetts / E88).